Reading from the N-terminus, the 249-residue chain is Elsinochromes biosynthesis cluster protein HP3 (249 aa).

The N-linked (GlcNAc...) asparagine glycan is linked to N106. Residues 138–158 (VVFAFMLSAWLVWLITVYAFA) traverse the membrane as a helical segment.

The protein localises to the membrane. Functionally, part of the gene cluster that mediates the biosynthesis of elsinochromes, pigments consisting of at least four interconvertible tautomers (A, B, C and D) that have a core phenolic quinone to which various side chains are attached and which play an important role in fungal pathogenesis. The non-reducing polyketide synthase PKS1 was proposed to iteratively catalyze decarboxylation between acetyl-CoA and malonyl-CoA subunits for polyketide chain elongation. The released polyketide undergoes cyclization to form an aromatic ring, and proceeds via serial modification steps to produce the heptaketide back- bone of elsinochrome. As elsinochrome has a symmetrical structure, two identical heptaketides are fused to form a core 1,2-dihydrobenzo-perylene ring structure, which can then be successively modified to produce the various derivatives of elsinochrome. Some of these reactions may be cooperatively carried out, at least in part, by the products of RDT1, OXR1 and PKS1. PRF1, embedded within the elsinochrome cluster possibly functions to stabilize some of the biosynthetic enzymes required for elsinochrome production. As prefoldin is a hexamer containing 2 a and 4 b subunits, additional prefoldin subunits, whose coding genes may not immediately link to the elsinochrome biosynthetic gene cluster, are required to fulfill the chaperone function. In addition, no methyltransferase-coding gene exists within the biosynthetic gene cluster, even though elsinochrome has four methyl groups at positions C3, C7, C8 and C12. Apparently, the identified gene cluster does not contain the entire entourage of genes responsible for elsinochrome biosynthesis. Once elsinochrome is synthesized, it must be exported outside the fungal cells, which is probably accomplished by the ECT1 transporter, to avoid toxicity. This is Elsinochromes biosynthesis cluster protein HP3 from Elsinoe fawcettii (Citrus scab fungus).